We begin with the raw amino-acid sequence, 367 residues long: Gelsolin-like protein 1 (367 aa).

The segment at Met1–Glu185 is actin binding. Gelsolin-like repeat units lie at residues Asn56–Arg141 and Gln179–Gln225. The tract at residues Asp106–Gly109 is actin-actin interfilament contact point. The tract at residues Val186 to Ala295 is actin binding, Actin-severing. The interval Pro235 to Leu257 is disordered. Residues Lys287–Gly322 form a Gelsolin-like 3 repeat. The tract at residues Val296 to Ala366 is actin-severing, Ca-sensitive.

Belongs to the villin/gelsolin family. As to quaternary structure, interacts with actin monomers and filaments. In terms of tissue distribution, expressed in circular and longitudinal muscle, pseudohearts, pharynx and gizzard. Also expressed in male germ cells at the proximal pole of primary spermatocytes in 16 cell-stage morulae, and in the distal parts of the spermatocytes in 32 and 64 cell-stage morulae. In the spermatids of the 128 cell-stage morulae it is expressed at the proximal pole of the elongated nucleus and the distal pole near the base of the flagellae.

It localises to the cytoplasm. It is found in the cytoskeleton. In terms of biological role, calcium-regulated protein that binds to the plus (or barbed) ends of actin monomers or filaments, preventing monomer exchange (end-blocking or capping). Can promote the assembly of monomers into filaments (nucleation) as well as sever existing filaments. This chain is Gelsolin-like protein 1, found in Lumbricus terrestris (Common earthworm).